A 789-amino-acid chain; its full sequence is MPPRQLSQTTPSCAVVPRKRRLVAALIAVPGLMPALAHAQLVGEAAQPQPIDAPWGMQLAPQLEERPLQPGQKPATFVLGDTTSGTTDQDMAAKGSAEVRRNTVVIKADALHYDQDTDMADAYGSVHVVNNGNSFVGPEAHMRVDSSEGFMTAPKYHFNVTGGSGSAERVDLLDNERSVFTKGTYTACACADDPAWYIKGSEFDFDTGADEGVAHNGVLFFQGFPVFASPWLSFPLSGERRSGVLPPTFSLSSSNGFELSVPYYFNIAPNRDLTLTPRLISKRGVQLQSTFRYLSPTYSGSITGEFLPDDHLTKTNRYALYIQHNQNFGNGFGGYIYYNKVSDNTYPEDLSSSVNQFMNGTQLLYQQEAGLTYNNGPWSVLAREQHWQTLTPSVAPYGREPQLNVKYAKYNVGGFDYGAEADYSNFRITTADMTQGQRVMFNPYLSYSVVGPGYFVTPKVQWHFASYNLNHLSDADVAAGTPKNFTESIPTLTFDTGLVFDRSVRIFGQDYIQTLEPRLYYVYTPYRNQQSAPLFDTADSDFGLAEIFTPNTFVGNDRIADANRLTAALTTRFIDAATGDERARFVIAQQYYFQDQRVTLQSTQTSAQATHSDLIAGASLKLGAGFASETAFQYNADNNQLVKTSVGFGFSPATGKVINVAYRYTRANTTLDNTPINQVLISGQWPLAHRVYGVGRFNYDLGGHRIVDGLVGLQYDADCWTLGAGIQRYANGLNTSGQNQSSTRFLAQLTFKGLSSVDNGLMTAFRSSVAGYTPLPPPPPPESRFTNYE.

Positions 1-39 (MPPRQLSQTTPSCAVVPRKRRLVAALIAVPGLMPALAHA) are cleaved as a signal peptide.

It belongs to the LptD family. Component of the lipopolysaccharide transport and assembly complex. Interacts with LptE and LptA.

Its subcellular location is the cell outer membrane. Together with LptE, is involved in the assembly of lipopolysaccharide (LPS) at the surface of the outer membrane. The polypeptide is LPS-assembly protein LptD (Paraburkholderia xenovorans (strain LB400)).